We begin with the raw amino-acid sequence, 142 residues long: Ribosome-binding factor A (142 aa).

The segment at 123–142 is disordered; sequence VQRDLDSAPEDDEPETGTGH. Residues 129–142 are compositionally biased toward acidic residues; the sequence is SAPEDDEPETGTGH.

Belongs to the RbfA family. As to quaternary structure, monomer. Binds 30S ribosomal subunits, but not 50S ribosomal subunits or 70S ribosomes.

It localises to the cytoplasm. Its function is as follows. One of several proteins that assist in the late maturation steps of the functional core of the 30S ribosomal subunit. Associates with free 30S ribosomal subunits (but not with 30S subunits that are part of 70S ribosomes or polysomes). Required for efficient processing of 16S rRNA. May interact with the 5'-terminal helix region of 16S rRNA. In Methylobacterium radiotolerans (strain ATCC 27329 / DSM 1819 / JCM 2831 / NBRC 15690 / NCIMB 10815 / 0-1), this protein is Ribosome-binding factor A.